The chain runs to 139 residues: S-adenosylmethionine decarboxylase proenzyme (139 aa).

The active-site Schiff-base intermediate with substrate; via pyruvic acid is the Ser-63. Pyruvic acid (Ser); by autocatalysis is present on Ser-63. His-68 acts as the Proton acceptor; for processing activity in catalysis. The active-site Proton donor; for catalytic activity is Cys-83.

Belongs to the prokaryotic AdoMetDC family. Type 1 subfamily. As to quaternary structure, heterotetramer of two alpha and two beta chains arranged as a dimer of alpha/beta heterodimers. The cofactor is pyruvate. Post-translationally, is synthesized initially as an inactive proenzyme. Formation of the active enzyme involves a self-maturation process in which the active site pyruvoyl group is generated from an internal serine residue via an autocatalytic post-translational modification. Two non-identical subunits are generated from the proenzyme in this reaction, and the pyruvate is formed at the N-terminus of the alpha chain, which is derived from the carboxyl end of the proenzyme. The post-translation cleavage follows an unusual pathway, termed non-hydrolytic serinolysis, in which the side chain hydroxyl group of the serine supplies its oxygen atom to form the C-terminus of the beta chain, while the remainder of the serine residue undergoes an oxidative deamination to produce ammonia and the pyruvoyl group blocking the N-terminus of the alpha chain.

It catalyses the reaction S-adenosyl-L-methionine + H(+) = S-adenosyl 3-(methylsulfanyl)propylamine + CO2. The protein operates within amine and polyamine biosynthesis; S-adenosylmethioninamine biosynthesis; S-adenosylmethioninamine from S-adenosyl-L-methionine: step 1/1. Functionally, catalyzes the decarboxylation of S-adenosylmethionine to S-adenosylmethioninamine (dcAdoMet), the propylamine donor required for the synthesis of the polyamines spermine and spermidine from the diamine putrescine. This chain is S-adenosylmethionine decarboxylase proenzyme, found in Pyrococcus furiosus (strain ATCC 43587 / DSM 3638 / JCM 8422 / Vc1).